The following is a 165-amino-acid chain: Endoribonuclease YbeY (165 aa).

Zn(2+) is bound by residues H130, H134, and H140.

It belongs to the endoribonuclease YbeY family. The cofactor is Zn(2+).

The protein localises to the cytoplasm. Single strand-specific metallo-endoribonuclease involved in late-stage 70S ribosome quality control and in maturation of the 3' terminus of the 16S rRNA. In Streptococcus pyogenes serotype M1, this protein is Endoribonuclease YbeY.